Here is a 342-residue protein sequence, read N- to C-terminus: S-adenosylmethionine:tRNA ribosyltransferase-isomerase (342 aa).

This sequence belongs to the QueA family. In terms of assembly, monomer.

It is found in the cytoplasm. It catalyses the reaction 7-aminomethyl-7-carbaguanosine(34) in tRNA + S-adenosyl-L-methionine = epoxyqueuosine(34) in tRNA + adenine + L-methionine + 2 H(+). The protein operates within tRNA modification; tRNA-queuosine biosynthesis. Transfers and isomerizes the ribose moiety from AdoMet to the 7-aminomethyl group of 7-deazaguanine (preQ1-tRNA) to give epoxyqueuosine (oQ-tRNA). This chain is S-adenosylmethionine:tRNA ribosyltransferase-isomerase, found in Zymomonas mobilis subsp. mobilis (strain ATCC 31821 / ZM4 / CP4).